A 272-amino-acid chain; its full sequence is Phosphatidylglycerol--prolipoprotein diacylglyceryl transferase (272 aa).

4 helical membrane passes run 16–36, 62–82, 97–117, and 129–149; these read VGLH…LSSF, FALG…VLFY, IWKG…WAAV, and LSVT…ALLI. Position 150 (arginine 150) interacts with a 1,2-diacyl-sn-glycero-3-phospho-(1'-sn-glycerol). The next 2 helical transmembrane spans lie at 206-226 and 246-266; these read GVIR…VAVI and ILTI…GIIW.

Belongs to the Lgt family.

The protein resides in the cell inner membrane. The catalysed reaction is L-cysteinyl-[prolipoprotein] + a 1,2-diacyl-sn-glycero-3-phospho-(1'-sn-glycerol) = an S-1,2-diacyl-sn-glyceryl-L-cysteinyl-[prolipoprotein] + sn-glycerol 1-phosphate + H(+). The protein operates within protein modification; lipoprotein biosynthesis (diacylglyceryl transfer). In terms of biological role, catalyzes the transfer of the diacylglyceryl group from phosphatidylglycerol to the sulfhydryl group of the N-terminal cysteine of a prolipoprotein, the first step in the formation of mature lipoproteins. The polypeptide is Phosphatidylglycerol--prolipoprotein diacylglyceryl transferase (Chlamydia trachomatis serovar D (strain ATCC VR-885 / DSM 19411 / UW-3/Cx)).